The primary structure comprises 186 residues: Peptidyl-tRNA hydrolase (186 aa).

TRNA is bound at residue Y14. Catalysis depends on H19, which acts as the Proton acceptor. The tRNA site is built by F65, N67, and N113.

The protein belongs to the PTH family. In terms of assembly, monomer.

The protein localises to the cytoplasm. It carries out the reaction an N-acyl-L-alpha-aminoacyl-tRNA + H2O = an N-acyl-L-amino acid + a tRNA + H(+). Hydrolyzes ribosome-free peptidyl-tRNAs (with 1 or more amino acids incorporated), which drop off the ribosome during protein synthesis, or as a result of ribosome stalling. In terms of biological role, catalyzes the release of premature peptidyl moieties from peptidyl-tRNA molecules trapped in stalled 50S ribosomal subunits, and thus maintains levels of free tRNAs and 50S ribosomes. This is Peptidyl-tRNA hydrolase from Limosilactobacillus fermentum (strain NBRC 3956 / LMG 18251) (Lactobacillus fermentum).